Consider the following 420-residue polypeptide: Threonine aspartase 1 (420 aa).

The tract at residues 1 to 23 is disordered; the sequence is MTMEKGMSSGEGLPSRSSQVSAG. The active-site Nucleophile is the Thr-234.

It belongs to the Ntn-hydrolase family. As to quaternary structure, intramolecular proteolysis generates 2 subunits, alpha and beta, which reassemble through a non-covalent association to form the fully active enzyme.

Protease responsible for KMT2A/MLL1 processing and activation. It also activates KMT2D/MLL2. Through substrate activation, it controls the expression of HOXA genes, and the expression of key cell cycle regulators including CCNA1, CCNB1, CCNE1 and CDKN2A. In Homo sapiens (Human), this protein is Threonine aspartase 1 (TASP1).